The sequence spans 367 residues: Phosphoribosylaminoimidazole-succinocarboxamide synthase (367 aa).

This sequence belongs to the SAICAR synthetase family.

The catalysed reaction is 5-amino-1-(5-phospho-D-ribosyl)imidazole-4-carboxylate + L-aspartate + ATP = (2S)-2-[5-amino-1-(5-phospho-beta-D-ribosyl)imidazole-4-carboxamido]succinate + ADP + phosphate + 2 H(+). It participates in purine metabolism; IMP biosynthesis via de novo pathway; 5-amino-1-(5-phospho-D-ribosyl)imidazole-4-carboxamide from 5-amino-1-(5-phospho-D-ribosyl)imidazole-4-carboxylate: step 1/2. This chain is Phosphoribosylaminoimidazole-succinocarboxamide synthase, found in Shewanella baltica (strain OS195).